The primary structure comprises 199 residues: MPASTRTASIERRTGETSIELTLNIDGSGMVDSATGIGFLDHMLHLFARHGLFDLKVHASGDLHVDEHHTAEDVCICLGQAFDRALGERRGLVRTAHAYVPMDEALGFVAVDLSGRPYCVVDADFVTPRVGQLGTDLIAHLFESIAIHGRMNLHARVLYGRNDHHKVEALFKALGRALDMATRIDERLGGAIPSTKGVL.

It belongs to the imidazoleglycerol-phosphate dehydratase family.

Its subcellular location is the cytoplasm. It carries out the reaction D-erythro-1-(imidazol-4-yl)glycerol 3-phosphate = 3-(imidazol-4-yl)-2-oxopropyl phosphate + H2O. The protein operates within amino-acid biosynthesis; L-histidine biosynthesis; L-histidine from 5-phospho-alpha-D-ribose 1-diphosphate: step 6/9. The polypeptide is Imidazoleglycerol-phosphate dehydratase (Roseiflexus sp. (strain RS-1)).